The primary structure comprises 310 residues: Tryptophan 2,3-dioxygenase (310 aa).

A disordered region spans residues 1 to 36 (MQPPGEDAPAGCPFSGARAAHSAPAAPAAHEASHVP). A compositionally biased stretch (low complexity) spans 15-36 (SGARAAHSAPAAPAAHEASHVP). Residues 79 to 83 (FIIQH), tyrosine 141, and arginine 145 each bind substrate. Histidine 268 contributes to the heme binding site. Threonine 282 serves as a coordination point for substrate.

This sequence belongs to the tryptophan 2,3-dioxygenase family. As to quaternary structure, homotetramer. Heme serves as cofactor.

The catalysed reaction is L-tryptophan + O2 = N-formyl-L-kynurenine. Its pathway is amino-acid degradation; L-tryptophan degradation via kynurenine pathway; L-kynurenine from L-tryptophan: step 1/2. In terms of biological role, heme-dependent dioxygenase that catalyzes the oxidative cleavage of the L-tryptophan (L-Trp) pyrrole ring and converts L-tryptophan to N-formyl-L-kynurenine. Catalyzes the oxidative cleavage of the indole moiety. This Burkholderia lata (strain ATCC 17760 / DSM 23089 / LMG 22485 / NCIMB 9086 / R18194 / 383) protein is Tryptophan 2,3-dioxygenase.